We begin with the raw amino-acid sequence, 64 residues long: Large ribosomal subunit protein bL35 (64 aa).

Residues 1 to 26 (MPKMKSHRGASKRFKRTASGKLKRSH) are compositionally biased toward basic residues. Residues 1 to 42 (MPKMKSHRGASKRFKRTASGKLKRSHAYTSHLFANKSTKAKR) are disordered.

This sequence belongs to the bacterial ribosomal protein bL35 family.

In Exiguobacterium sp. (strain ATCC BAA-1283 / AT1b), this protein is Large ribosomal subunit protein bL35.